The chain runs to 448 residues: Endoglucanase (448 aa).

A signal peptide spans 1–34 (MFSKIKKINFFKKTFSFLIAVVMMLFTVLGTNTY). Residues His-70, 74-75 (WY), Tyr-101, and His-137 contribute to the substrate site. The active-site Proton donor is the Glu-175. Substrate is bound at residue Tyr-237. Glu-263 acts as the Nucleophile in catalysis. Residues 269–270 (AS), Trp-297, and 302–304 (KSE) contribute to the substrate site.

This sequence belongs to the glycosyl hydrolase 5 (cellulase A) family.

It catalyses the reaction Endohydrolysis of (1-&gt;4)-beta-D-glucosidic linkages in cellulose, lichenin and cereal beta-D-glucans.. The sequence is that of Endoglucanase (eglA) from Clostridium saccharobutylicum.